The primary structure comprises 101 residues: Urinary protein 2 (101 aa).

Positions 1-21 (MGKHILLLPLGLSLLMSSLLA) are cleaved as a signal peptide. Positions 22-99 (LQCFRCTSFD…CSATPFCNMV (78 aa)) constitute a UPAR/Ly6 domain. 5 disulfide bridges follow: cysteine 24/cysteine 51, cysteine 27/cysteine 36, cysteine 43/cysteine 70, cysteine 73/cysteine 89, and cysteine 90/cysteine 96. Asparagine 67 and asparagine 74 each carry an N-linked (GlcNAc...) asparagine glycan.

Post-translationally, N-glycosylated.

The protein resides in the secreted. This is Urinary protein 2 from Rattus norvegicus (Rat).